The chain runs to 280 residues: ATP synthase subunit a (280 aa).

The next 7 helical transmembrane spans lie at A45–F65, L105–L125, L126–V146, L159–F179, F190–L210, M223–G243, and A250–V270.

Belongs to the ATPase A chain family. In terms of assembly, F-type ATPases have 2 components, CF(1) - the catalytic core - and CF(0) - the membrane proton channel. CF(1) has five subunits: alpha(3), beta(3), gamma(1), delta(1), epsilon(1). CF(0) has three main subunits: a(1), b(2) and c(9-12). The alpha and beta chains form an alternating ring which encloses part of the gamma chain. CF(1) is attached to CF(0) by a central stalk formed by the gamma and epsilon chains, while a peripheral stalk is formed by the delta and b chains.

The protein resides in the cell inner membrane. In terms of biological role, key component of the proton channel; it plays a direct role in the translocation of protons across the membrane. This is ATP synthase subunit a from Thiobacillus denitrificans (strain ATCC 25259 / T1).